Here is a 520-residue protein sequence, read N- to C-terminus: Probable glycerol-3-phosphate acyltransferase 3 (520 aa).

Helical transmembrane passes span 5–20 (ISIF…RFIL), 64–84 (YFML…LFIL), 88–108 (ISLM…FFGI), 264–284 (TLMN…AAAA), and 286–306 (LFVS…FSGC). Residues 334–339 (HRTLLD) carry the HXXXXD motif motif.

This sequence belongs to the GPAT/DAPAT family. In terms of tissue distribution, widely expressed at low level. Expressed at higher level in seedlings and leaves.

It is found in the membrane. It carries out the reaction sn-glycerol 3-phosphate + an acyl-CoA = a 1-acyl-sn-glycero-3-phosphate + CoA. Its pathway is phospholipid metabolism; CDP-diacylglycerol biosynthesis; CDP-diacylglycerol from sn-glycerol 3-phosphate: step 1/3. Esterifies acyl-group from acyl-ACP to the sn-1 position of glycerol-3-phosphate, an essential step in glycerolipid biosynthesis. This is Probable glycerol-3-phosphate acyltransferase 3 (GPAT3) from Arabidopsis thaliana (Mouse-ear cress).